Here is a 218-residue protein sequence, read N- to C-terminus: MDTDFWLQRWQDGQTGFHQDEVMPLLQKHWPALQLPAHARVLVPLCGKTLDLHWLAAQGHRVLGVEISPLAVTQFFDDAGLQPQRHTSRAGEHCIAGPIEIICGDAFTLDASVLGDCTAVYDRAALVALPAALRQRYLETVYARLPAGCRGLLITLDYPQAEKAGPPFSVDAAEVHALFGTQWKVQELEHRDILDQEPRFRADGVTALSTGVYRLQRD.

Residues Trp-10, Leu-45, Glu-66, and Arg-123 each coordinate S-adenosyl-L-methionine.

The protein belongs to the class I-like SAM-binding methyltransferase superfamily. TPMT family.

The protein resides in the cytoplasm. It carries out the reaction S-adenosyl-L-methionine + a thiopurine = S-adenosyl-L-homocysteine + a thiopurine S-methylether.. This Xanthomonas campestris pv. campestris (strain 8004) protein is Thiopurine S-methyltransferase.